The chain runs to 361 residues: Allatostatin-A receptor (361 aa).

Residues 1-46 are Extracellular-facing; it reads MESTEDEFYTICLNLTAEDPSFGNCNYTTDFENGELLEKVVSRVVP. N-linked (GlcNAc...) asparagine glycosylation is found at N14 and N26. Residues 47-67 form a helical membrane-spanning segment; the sequence is IFFGFIGIVGLVGNALVVLVV. The Cytoplasmic portion of the chain corresponds to 68–78; sequence AANPGMRSTTN. A helical transmembrane segment spans residues 79 to 99; it reads LLIINLAVADLLFVIFCVPFT. Residues 100–116 are Extracellular-facing; sequence ATDYVMPRWPFGDWWCK. A disulfide bridge links C115 with C196. A helical transmembrane segment spans residues 117–137; sequence VVQYFIVVTAHASVYTLVLMS. Residues 138–158 are Cytoplasmic-facing; the sequence is LDRFMAVVHPIASMSIRTEKN. Residues 159 to 179 form a helical membrane-spanning segment; it reads ALLAIACIWVVILTTAIPVGI. The Extracellular portion of the chain corresponds to 180–212; the sequence is CHGEREYSYFNRNHSSCVFLEERGYSKLGFQMS. N-linked (GlcNAc...) asparagine glycosylation is present at N192. Residues 213–233 traverse the membrane as a helical segment; the sequence is FFLSSYVIPLALISVLYMCML. Residues 234 to 259 are Cytoplasmic-facing; it reads TRLWKSAPGGRVSAESRRGRKKVTRM. Residues 260 to 280 form a helical membrane-spanning segment; sequence VVVVVVVFAVCWCPIQIILLV. At 281–296 the chain is on the extracellular side; it reads KALNKYHITYFTVTAQ. The chain crosses the membrane as a helical span at residues 297 to 317; the sequence is IVSHVLAYMNSCVNPVLYAFL. The Cytoplasmic portion of the chain corresponds to 318–361; it reads SENFRVAFRKVMYCPPPYNDGFSGRPQATKTTRTGNGNSCHDIV. Residues 341-361 form a disordered region; that stretch reads GRPQATKTTRTGNGNSCHDIV. The segment covering 343-361 has biased composition (polar residues); it reads PQATKTTRTGNGNSCHDIV.

This sequence belongs to the G-protein coupled receptor 1 family. In terms of tissue distribution, expressed in the midgut and, to a lesser extent, in the fore- and hindgut of fifth instar larvae. Also highly expressed in the brain of fourth and fifth instar larvae.

Its subcellular location is the cell membrane. Its function is as follows. Acts as a receptor for A-type allatostatin neuropeptide hormones. This is Allatostatin-A receptor from Bombyx mori (Silk moth).